Consider the following 136-residue polypeptide: Small ribosomal subunit protein uS19 (136 aa).

Belongs to the universal ribosomal protein uS19 family.

Its function is as follows. Protein S19 forms a complex with S13 that binds strongly to the 16S ribosomal RNA. This chain is Small ribosomal subunit protein uS19, found in Methanosphaera stadtmanae (strain ATCC 43021 / DSM 3091 / JCM 11832 / MCB-3).